We begin with the raw amino-acid sequence, 372 residues long: MKQLPVLEPGDKPRKETWYTLTLVGDSPCARVGHSCSYLPPVGDAERGKVFIVGGADPNRSFSDVHTIDLGTHQWDLATSEGLLPRYEHTSFIPSCTPHSIWVFGGADQSGNRNCLQVLNPDTRTWTTPEVTGPPPSPRTFHTSSAAIGDQLYVFGGGERGAQPVQDVQLHVFDANTLTWSQPETHGKPPSPRHGHVMVAAGTKLFIHGGLAGDNFYDDLHCIDISDMKWQKLRPTGAAPTGCAAHSAVAVGKHLYVFGGMTPTGALNTMYQYHIEKQHWTLLKFENSPPTGRLDHSMCIIPWPGTCTSEKEDSNSATVNRDAEKGDSTEKGVTQGGDSQEESQADTLLCFVFGGMNTEGEIYDDCIVTAVD.

Kelch repeat units follow at residues 49–95, 100–146, 151–203, 204–250, and 254–303; these read KVFI…FIPS, SIWV…TSSA, QLYV…AAGT, KLFI…SAVA, and HLYV…IIPW. The segment at 309-341 is disordered; that stretch reads SEKEDSNSATVNRDAEKGDSTEKGVTQGGDSQE. Basic and acidic residues predominate over residues 321-330; the sequence is RDAEKGDSTE. The stretch at 349–372 is one Kelch 6 repeat; it reads LCFVFGGMNTEGEIYDDCIVTAVD.

In terms of assembly, interacts with PIKFYVE; the interaction recruits RABEPK to the endosomal membrane. Interacts with RAB9 in its GTP-bound conformation. Post-translationally, phosphorylated on Ser residues by PIKFYVE.

It is found in the cytoplasm. It localises to the endosome membrane. Its function is as follows. Rab9 effector required for endosome to trans-Golgi network (TGN) transport. The polypeptide is Rab9 effector protein with kelch motifs (RABEPK) (Bos taurus (Bovine)).